The chain runs to 434 residues: Trigger factor (434 aa).

One can recognise a PPIase FKBP-type domain in the interval 160-245 (GDKVKMNFVG…LTEVQAANLP (86 aa)).

It belongs to the FKBP-type PPIase family. Tig subfamily.

The protein localises to the cytoplasm. The catalysed reaction is [protein]-peptidylproline (omega=180) = [protein]-peptidylproline (omega=0). Its function is as follows. Involved in protein export. Acts as a chaperone by maintaining the newly synthesized protein in an open conformation. Functions as a peptidyl-prolyl cis-trans isomerase. The sequence is that of Trigger factor from Shewanella baltica (strain OS223).